We begin with the raw amino-acid sequence, 333 residues long: Mitochondrial glycine transporter (333 aa).

The disordered stretch occupies residues 1–25; the sequence is MTNAATDKSVASVARDVSTGKPGKS. Solcar repeat units follow at residues 26–109, 127–220, and 236–319; these read PDAA…MRAA, LLPM…FKND, and RSSV…LIKS. Transmembrane regions (helical) follow at residues 32–57, 84–110, 133–158, 195–218, 240–266, and 294–312; these read LLSG…TRLQ, GAVP…RAAV, LATG…TRFE, GSVA…EGFK, INSS…KTRL, and GLSL…SWCI.

It belongs to the mitochondrial carrier (TC 2.A.29) family. SLC25A38 subfamily.

It is found in the mitochondrion inner membrane. It carries out the reaction glycine(in) = glycine(out). Mitochondrial glycine transporter that imports glycine into the mitochondrial matrix. Plays an important role in providing glycine for the first enzymatic step in heme biosynthesis, the condensation of glycine with succinyl-CoA to produce 5-aminolevulinate (ALA) in the mitochondrial matrix. The polypeptide is Mitochondrial glycine transporter (Scheffersomyces stipitis (strain ATCC 58785 / CBS 6054 / NBRC 10063 / NRRL Y-11545) (Yeast)).